Reading from the N-terminus, the 471-residue chain is MEKQKNVGHIVQIFGPVIDVQFPNEHMPAILSALEVKINDESIIFEVAQHLGEGIVRAIAMSMTYNLSKGLEVYDTGSQISVPVGKQVLSRMFNVLGQPIDGGKPLDSFIKNPIHAKAPTYLEQKATSEILVTGIKVIDLLIPFIKGGKIGLFGGAGVGKTVLVQELINNIASKHGGLSVFAGVGERSREGNDLYFEMKKAGVLDKTALVFGQMNEPPGARMRVALSALTMAEYFRDYENQDVLLFIDNIFRFTQAGSEVSTLLGRIPSTVGYQPTLSTEMGQLQERITSTIRGSITSVQAVYVPADDITDPAPATTFSHLDAKTVLDRGIAALGIYPAVDPLASSSRALEPNIVGKKHYLVAKKVVQILQRFKELQDIIAILGVDELSESDKQVVARARRIRNFLSQPFFVAQKFSGIQGQFIKIQDTVNNFDELLSGKYDNIPEEAFLYVGTIDQALEKAKKMGWSEKN.

154–161 (GGAGVGKT) contributes to the ATP binding site.

This sequence belongs to the ATPase alpha/beta chains family. As to quaternary structure, F-type ATPases have 2 components, CF(1) - the catalytic core - and CF(0) - the membrane proton channel. CF(1) has five subunits: alpha(3), beta(3), gamma(1), delta(1), epsilon(1). CF(0) has three main subunits: a(1), b(2) and c(9-12). The alpha and beta chains form an alternating ring which encloses part of the gamma chain. CF(1) is attached to CF(0) by a central stalk formed by the gamma and epsilon chains, while a peripheral stalk is formed by the delta and b chains.

It is found in the cell membrane. The catalysed reaction is ATP + H2O + 4 H(+)(in) = ADP + phosphate + 5 H(+)(out). Functionally, produces ATP from ADP in the presence of a proton gradient across the membrane. The catalytic sites are hosted primarily by the beta subunits. This Mesomycoplasma hyopneumoniae (strain J / ATCC 25934 / NCTC 10110) (Mycoplasma hyopneumoniae) protein is ATP synthase subunit beta.